Consider the following 365-residue polypeptide: Flagellar P-ring protein (365 aa).

An N-terminal signal peptide occupies residues 1–19 (MIKFLSALILLLVITAAQA).

The protein belongs to the FlgI family. The basal body constitutes a major portion of the flagellar organelle and consists of four rings (L,P,S, and M) mounted on a central rod.

The protein resides in the periplasm. It is found in the bacterial flagellum basal body. Functionally, assembles around the rod to form the L-ring and probably protects the motor/basal body from shearing forces during rotation. The chain is Flagellar P-ring protein from Escherichia coli O81 (strain ED1a).